The following is a 236-amino-acid chain: UPF0257 lipoprotein YnfC (236 aa).

Residues 1–16 (MKYKLLPCLLAIFLTG) form the signal peptide. The N-palmitoyl cysteine moiety is linked to residue Cys17. Residue Cys17 is the site of S-diacylglycerol cysteine attachment.

It belongs to the UPF0257 family.

It is found in the cell membrane. The protein is UPF0257 lipoprotein YnfC of Escherichia coli O7:K1 (strain IAI39 / ExPEC).